We begin with the raw amino-acid sequence, 435 residues long: Serine hydroxymethyltransferase 2 (435 aa).

(6S)-5,6,7,8-tetrahydrofolate is bound by residues leucine 135 and 139–141 (GHL). Lysine 244 carries the post-translational modification N6-(pyridoxal phosphate)lysine. (6S)-5,6,7,8-tetrahydrofolate is bound at residue glutamate 260.

Belongs to the SHMT family. In terms of assembly, homodimer. It depends on pyridoxal 5'-phosphate as a cofactor.

It localises to the cytoplasm. It carries out the reaction (6R)-5,10-methylene-5,6,7,8-tetrahydrofolate + glycine + H2O = (6S)-5,6,7,8-tetrahydrofolate + L-serine. The protein operates within one-carbon metabolism; tetrahydrofolate interconversion. Its pathway is amino-acid biosynthesis; glycine biosynthesis; glycine from L-serine: step 1/1. Its function is as follows. Catalyzes the reversible interconversion of serine and glycine with tetrahydrofolate (THF) serving as the one-carbon carrier. This reaction serves as the major source of one-carbon groups required for the biosynthesis of purines, thymidylate, methionine, and other important biomolecules. Also exhibits THF-independent aldolase activity toward beta-hydroxyamino acids, producing glycine and aldehydes, via a retro-aldol mechanism. This Vibrio cholerae serotype O1 (strain ATCC 39315 / El Tor Inaba N16961) protein is Serine hydroxymethyltransferase 2.